A 422-amino-acid chain; its full sequence is Phosphoribosylamine--glycine ligase (422 aa).

An ATP-grasp domain is found at 107–312; it reads KDVMAAAGVR…LGQLLHAAAT (206 aa). 137–193 serves as a coordination point for ATP; the sequence is GPPAGDPAWVVKDDRLAAGKGVVVTADRDVARAHGAALLEAGHPVLLESYLDGPEVS. Residues Glu-282 and Asn-284 each contribute to the Mg(2+) site.

It belongs to the GARS family. Mg(2+) is required as a cofactor. Mn(2+) serves as cofactor.

The catalysed reaction is 5-phospho-beta-D-ribosylamine + glycine + ATP = N(1)-(5-phospho-beta-D-ribosyl)glycinamide + ADP + phosphate + H(+). The protein operates within purine metabolism; IMP biosynthesis via de novo pathway; N(1)-(5-phospho-D-ribosyl)glycinamide from 5-phospho-alpha-D-ribose 1-diphosphate: step 2/2. This chain is Phosphoribosylamine--glycine ligase, found in Mycobacterium bovis (strain ATCC BAA-935 / AF2122/97).